Consider the following 130-residue polypeptide: Lysozyme C (130 aa).

Residues 1–130 (KVWERCALAR…VEQYVEGCDL (130 aa)) form the C-type lysozyme domain. 4 disulfide bridges follow: Cys-6–Cys-128, Cys-30–Cys-116, Cys-65–Cys-81, and Cys-77–Cys-95. Catalysis depends on residues Glu-35 and Asp-53.

The protein belongs to the glycosyl hydrolase 22 family. In terms of assembly, monomer.

It catalyses the reaction Hydrolysis of (1-&gt;4)-beta-linkages between N-acetylmuramic acid and N-acetyl-D-glucosamine residues in a peptidoglycan and between N-acetyl-D-glucosamine residues in chitodextrins.. In terms of biological role, lysozymes have primarily a bacteriolytic function; those in tissues and body fluids are associated with the monocyte-macrophage system and enhance the activity of immunoagents. The chain is Lysozyme C (LYZ) from Camelus dromedarius (Dromedary).